Reading from the N-terminus, the 517-residue chain is MIEVLIGLGAGVAGVGAGYLYAKKINDANYNIFLEQAKAKAKAIEYEAELTLKNSKISVQEAEFEAKKRYDDKTTKLQKEYSQKFDELNKKEQILLNEQELLNENKELFEKDRNEAKLTYEEGLNLKATYQSKVQEALKVLEHAAGLTEDEAREVVLKKVEEKSRADIAHIVRKHEEEAKREAKKRVNYILAQATSRFAGEFAAERLINVVNIKNDELKGRIIGKEGRNIKTLEMVLGVDIIIDDTPHAIILSSFNLYRRAIATRVIELLVEDGRIQPARIEDLHKKVTEEFEQSIQEEGENIVIDLGLSKIHPEITKLIGKLKFRASYGQNALAHSLEVAHLAGIIAAETGGDEKLAKRAGLLHDIGKALTHEFEGSHVDLGAEICKRYKEHPVVINAIYAHHGHEEATSIESAAVCAADCLSAARPGARREVLESFLKRVEEVENIAKSKDGIKQAYAINAGREIRVIANAKLINDDEAVLVAKEIAKEIEEKVQYPGEIKVSVIRETRAVDYAK.

A helical transmembrane segment spans residues 1–21 (MIEVLIGLGAGVAGVGAGYLY). Residues 207-273 (LINVVNIKND…TRVIELLVED (67 aa)) enclose the KH domain. Positions 333–426 (ALAHSLEVAH…VCAADCLSAA (94 aa)) constitute an HD domain.

Belongs to the RNase Y family.

It is found in the cell membrane. In terms of biological role, endoribonuclease that initiates mRNA decay. This chain is Ribonuclease Y, found in Campylobacter curvus (strain 525.92).